We begin with the raw amino-acid sequence, 229 residues long: Potassium/proton antiporter CemA (229 aa).

The next 4 membrane-spanning stretches (helical) occupy residues 7-27 (FTPL…SLSF), 114-134 (LICF…LLIL), 154-174 (ILLL…ELMI), and 189-209 (IISG…KYWI).

The protein belongs to the CemA family.

It is found in the plastid. The protein resides in the chloroplast inner membrane. The enzyme catalyses K(+)(in) + H(+)(out) = K(+)(out) + H(+)(in). Its function is as follows. Contributes to K(+)/H(+) antiport activity by supporting proton efflux to control proton extrusion and homeostasis in chloroplasts in a light-dependent manner to modulate photosynthesis. Prevents excessive induction of non-photochemical quenching (NPQ) under continuous-light conditions. Indirectly promotes efficient inorganic carbon uptake into chloroplasts. This is Potassium/proton antiporter CemA from Gossypium barbadense (Sea Island cotton).